A 537-amino-acid chain; its full sequence is MRRNAVIRSAIMPSLLGAALVAAVPQAFASNLIFCSEGSPAGFDPAQYTTGTDFDAAAETVFNRLTQFERGGTKVLPGLAESWDVSDDGKTYTFHLRKGVKFHSTDYFKPTREFNADDVLFTFERMLDKDHPFRKAYPTEFPYFTDMGLDKNIARIEKLDEHTVKFTLNEVDAAFIQNLAMPFPSIQSAEYAAQLLKQGKASDINQKPIGTGPFVFSRYQKDAQIRFKGNKDYWKPDEVKVDNLIFAINTDASVRAQKLKAGECQITLNPRPADLDALKKDPNLNLPSQAGFNLGYIAYNVTHKPFDKLEVRQALDMAVNKQAIIDAVYQGAGQLASNGMPPTQWSYDETIKDAPYDPAKARELLKKAGVAEGTEITLWAMPVQRPYNPNAKLMAEMLQNDWAKIGIKAKIVTYEWGEYIKRAKGGEHDAMLIGWSGDNGDPDNWLGTLYGCDAVDGNNFSKWCDAGYDKLVKDAKRTTDQGKRTELYKQAQHILKEQVPITPIAHSTVYQPMRKTVHDFRISPFGLNSFYEVSVGK.

A signal peptide spans M1–A29.

This sequence belongs to the bacterial solute-binding protein 5 family. In terms of assembly, the complex is composed of two ATP-binding proteins (DppD and DppF), two transmembrane proteins (DppB and DppC) and a solute-binding protein (DppA1). Five orthologous SBPs (DppA1-A5) are present in P.aeruginosa, which increases the substrate specificity of the DppBCDF transporter.

In terms of biological role, part of the ABC transporter DppABCDF involved in the uptake of various di/tripeptides. Prefers dipeptides with acidic residues at the C-terminal end. Involved in the uptake of phaseolotoxin, a toxic tripeptide inhibiting the enzyme ornithine carbamoyltransferase. The polypeptide is Di/tripeptide-binding protein 1 (Pseudomonas aeruginosa (strain UCBPP-PA14)).